The chain runs to 1265 residues: Kinesin-like protein Klp98A (1265 aa).

A Kinesin motor domain is found at 3–364; that stretch reads SLKVAVRVRP…LRYANRAKNI (362 aa). Position 100–107 (100–107) interacts with ATP; that stretch reads GQTGSGKT. 3 disordered regions span residues 597-621, 828-864, and 884-954; these read GASP…DPEL, EAES…DVSK, and VSSP…CTPS. Coiled coils occupy residues 619 to 670 and 768 to 848; these read PELQ…EEMD and AQFI…LGNK. Composition is skewed to polar residues over residues 846–857, 884–901, and 917–927; these read GNKSMSTSTSTN, VSSP…SNCS, and SGSSEETSRTC. Residues 933–946 are compositionally biased toward gly residues; sequence SGSGSGSVGIGGSG. Residues 1035-1071 adopt a coiled-coil conformation; that stretch reads DLNKAQLDEHIADLQDLQRRYIQMEQEMLQSVQDLEA. Residues 1129 to 1259 form the PX domain; it reads GEHFITIPSF…SFFKKGLFEN (131 aa).

Belongs to the TRAFAC class myosin-kinesin ATPase superfamily. Kinesin family. As to quaternary structure, interacts with Atg8a and Rab14.

The protein localises to the early endosome. Plus end-directed motor protein involved in asymmetric cell division of sensory organ precursor (SOP) cells by playing a role in the asymmetric localization of Sara-expressing endosomes to the pIIa daughter cell but not to the pIIb cell. Targets Sara-expressing endosomes to the central spindle which is symmetrically arranged in early cell division. During late cytokinesis, central spindle asymmetry is generated by enrichment of Patronin on the pIIb side which protects microtubules from depolymerization by Klp10A while unprotected microtubules on the pIIa side are disassembled by Klp10A, leading to the asymmetric delivery of Sara-expressing endosomes to the pIIa daughter cell. Also plays a role in regulation of autophagosome formation, fusion and positioning and is required for normal localization of Rab14. This chain is Kinesin-like protein Klp98A, found in Drosophila melanogaster (Fruit fly).